The primary structure comprises 208 residues: AN1-type zinc finger protein 6 (208 aa).

The segment at 8 to 42 (SQVPMLCSTGCGFYGNPRTNGMCSVCYKEHLQRQN) adopts an A20-type zinc-finger fold. Zn(2+)-binding residues include C14, C18, C30, and C33. The interval 41–110 (QNSSNGRISP…ASSQVDSTSV (70 aa)) is disordered. Phosphoserine is present on S49. The segment covering 54–68 (SVTSLSESLPVQCTD) has biased composition (polar residues). The segment covering 83–94 (SSVQPSPVSNQS) has biased composition (low complexity). The span at 95–110 (LLSESVASSQVDSTSV) shows a compositional bias: polar residues. An AN1-type zinc finger spans residues 143–189 (KQKKNRCFMCRKKVGLTGFECRCGNVYCGVHRYSDVHNCSYNYKADA). The Zn(2+) site is built by C149, C152, C163, C165, C170, H173, H179, and C181. K204 carries the post-translational modification N6-acetyllysine.

Interacts with PKN1.

The sequence is that of AN1-type zinc finger protein 6 (ZFAND6) from Bos taurus (Bovine).